Reading from the N-terminus, the 749-residue chain is Myosin-binding protein 2 (749 aa).

Residues 17 to 37 (ITLILVYAFLEWSLIFFILLN) form a helical membrane-spanning segment. The tract at residues 164–184 (NLNDSQEETEEKKVPQSHEKL) is disordered. Positions 173-184 (EEKKVPQSHEKL) are enriched in basic and acidic residues. The 99-residue stretch at 411 to 509 (LTVDKLKFEL…ELEKELEVYR (99 aa)) folds into the GTD-binding domain. The stretch at 589–621 (ERLSILGRLKFLEEKLTDLNNEEDDEEEAKTFE) forms a coiled coil. Residues 608–640 (NNEEDDEEEAKTFESNGSINGNEHIHGKETNGK) form a disordered region. A compositionally biased stretch (basic and acidic residues) spans 630-639 (EHIHGKETNG). The stretch at 676–710 (DSEKGENVTIEEEVDELYERLEALEADREFLRHCV) forms a coiled coil.

In terms of assembly, interacts with myosin XI-K and XI-1. As to expression, expressed in leaf epidermal cells, roots and root hairs.

The protein localises to the endomembrane system. Membrane-anchored myosin receptors that define a distinct, plant-specific transport vesicle compartment. The chain is Myosin-binding protein 2 from Arabidopsis thaliana (Mouse-ear cress).